Here is a 173-residue protein sequence, read N- to C-terminus: Large ribosomal subunit protein bL12m (173 aa).

The N-terminal 33 residues, 1 to 33, are a transit peptide targeting the mitochondrion; it reads MFRIASRQTRNLRALSSSKNWARSLVNTRSFRA.

This sequence belongs to the bacterial ribosomal protein bL12 family. As to quaternary structure, component of the mitochondrial large ribosomal subunit (mt-LSU). Mature yeast 74S mitochondrial ribosomes consist of a small (37S) and a large (54S) subunit. The 37S small subunit contains a 15S ribosomal RNA (15S mt-rRNA) and at least 32 different proteins. The 54S large subunit contains a 21S rRNA (21S mt-rRNA) and at least 45 different proteins.

Its subcellular location is the mitochondrion. Its function is as follows. Component of the mitochondrial ribosome (mitoribosome), a dedicated translation machinery responsible for the synthesis of mitochondrial genome-encoded proteins, including at least some of the essential transmembrane subunits of the mitochondrial respiratory chain. The mitoribosomes are attached to the mitochondrial inner membrane and translation products are cotranslationally integrated into the membrane. This is Large ribosomal subunit protein bL12m (mrpl12) from Schizosaccharomyces pombe (strain 972 / ATCC 24843) (Fission yeast).